A 255-amino-acid polypeptide reads, in one-letter code: Proteasome subunit alpha (255 aa).

This sequence belongs to the peptidase T1A family. As to quaternary structure, the 20S proteasome core is composed of 14 alpha and 14 beta subunits that assemble into four stacked heptameric rings, resulting in a barrel-shaped structure. The two inner rings, each composed of seven catalytic beta subunits, are sandwiched by two outer rings, each composed of seven alpha subunits. The catalytic chamber with the active sites is on the inside of the barrel. Has a gated structure, the ends of the cylinder being occluded by the N-termini of the alpha-subunits. Is capped at one or both ends by the proteasome regulatory ATPase, PAN.

It localises to the cytoplasm. With respect to regulation, the formation of the proteasomal ATPase PAN-20S proteasome complex, via the docking of the C-termini of PAN into the intersubunit pockets in the alpha-rings, triggers opening of the gate for substrate entry. Interconversion between the open-gate and close-gate conformations leads to a dynamic regulation of the 20S proteasome proteolysis activity. In terms of biological role, component of the proteasome core, a large protease complex with broad specificity involved in protein degradation. The protein is Proteasome subunit alpha of Natronomonas pharaonis (strain ATCC 35678 / DSM 2160 / CIP 103997 / JCM 8858 / NBRC 14720 / NCIMB 2260 / Gabara) (Halobacterium pharaonis).